The following is a 503-amino-acid chain: Probable cytosol aminopeptidase (503 aa).

Lysine 270 and aspartate 275 together coordinate Mn(2+). Lysine 282 is a catalytic residue. Mn(2+) is bound by residues aspartate 293, aspartate 352, and glutamate 354. The active site involves arginine 356.

It belongs to the peptidase M17 family. Mn(2+) serves as cofactor.

Its subcellular location is the cytoplasm. It carries out the reaction Release of an N-terminal amino acid, Xaa-|-Yaa-, in which Xaa is preferably Leu, but may be other amino acids including Pro although not Arg or Lys, and Yaa may be Pro. Amino acid amides and methyl esters are also readily hydrolyzed, but rates on arylamides are exceedingly low.. It catalyses the reaction Release of an N-terminal amino acid, preferentially leucine, but not glutamic or aspartic acids.. In terms of biological role, presumably involved in the processing and regular turnover of intracellular proteins. Catalyzes the removal of unsubstituted N-terminal amino acids from various peptides. This is Probable cytosol aminopeptidase from Citrobacter koseri (strain ATCC BAA-895 / CDC 4225-83 / SGSC4696).